A 336-amino-acid chain; its full sequence is DNA repair protein Rad51 homolog (336 aa).

The segment covering Met-1–Gln-10 has biased composition (polar residues). Positions Met-1–Leu-20 are disordered. Gly-124–Thr-131 serves as a coordination point for ATP.

This sequence belongs to the RecA family. RAD51 subfamily. As to quaternary structure, interacts with Rrp6; the interaction is required for the recruitment of spn-A to the DNA-damage response foci. In terms of tissue distribution, highly expressed in ovaries.

It is found in the nucleus. The protein resides in the cytoplasm. Plays an important role in homologous strand exchange, a key step in DNA repair through homologous recombination (HR). Binds to single and double-stranded DNA and exhibits DNA-dependent ATPase activity. Underwinds duplex DNA. Spindle genes are required for each of the symmetry-breaking steps that generate polarity during egg axis formation; oocyte positioning at the posterior of the cyst to generate the first AP polarity and inhibition of gurken (grk) signaling to the follicle cell layer to polarize first the AP axis and then DV axis. May have a role in female meiosis. The sequence is that of DNA repair protein Rad51 homolog (spn-A) from Drosophila melanogaster (Fruit fly).